Reading from the N-terminus, the 273-residue chain is Undecaprenyl-diphosphatase (273 aa).

7 helical membrane-spanning segments follow: residues 39-59, 86-106, 117-137, 146-166, 189-209, 220-240, and 249-269; these read SGLT…VVYF, LPFL…LFET, LLIG…DLFG, VTVS…IPGV, FSFL…MLHL, LPLA…VAFL, and IAPF…VILT.

It belongs to the UppP family.

It is found in the cell inner membrane. It catalyses the reaction di-trans,octa-cis-undecaprenyl diphosphate + H2O = di-trans,octa-cis-undecaprenyl phosphate + phosphate + H(+). Its function is as follows. Catalyzes the dephosphorylation of undecaprenyl diphosphate (UPP). Confers resistance to bacitracin. The polypeptide is Undecaprenyl-diphosphatase (Pelobacter propionicus (strain DSM 2379 / NBRC 103807 / OttBd1)).